Here is a 268-residue protein sequence, read N- to C-terminus: Indole-3-glycerol phosphate synthase (268 aa).

The protein belongs to the TrpC family.

The enzyme catalyses 1-(2-carboxyphenylamino)-1-deoxy-D-ribulose 5-phosphate + H(+) = (1S,2R)-1-C-(indol-3-yl)glycerol 3-phosphate + CO2 + H2O. The protein operates within amino-acid biosynthesis; L-tryptophan biosynthesis; L-tryptophan from chorismate: step 4/5. The sequence is that of Indole-3-glycerol phosphate synthase from Micrococcus luteus (strain ATCC 4698 / DSM 20030 / JCM 1464 / CCM 169 / CCUG 5858 / IAM 1056 / NBRC 3333 / NCIMB 9278 / NCTC 2665 / VKM Ac-2230) (Micrococcus lysodeikticus).